Consider the following 363-residue polypeptide: Aminomethyltransferase (363 aa).

The protein belongs to the GcvT family. As to quaternary structure, the glycine cleavage system is composed of four proteins: P, T, L and H.

The enzyme catalyses N(6)-[(R)-S(8)-aminomethyldihydrolipoyl]-L-lysyl-[protein] + (6S)-5,6,7,8-tetrahydrofolate = N(6)-[(R)-dihydrolipoyl]-L-lysyl-[protein] + (6R)-5,10-methylene-5,6,7,8-tetrahydrofolate + NH4(+). In terms of biological role, the glycine cleavage system catalyzes the degradation of glycine. The protein is Aminomethyltransferase of Saccharophagus degradans (strain 2-40 / ATCC 43961 / DSM 17024).